The sequence spans 473 residues: Bifunctional protein HldE (473 aa).

Residues 1-317 (MKLSMPRFDQ…RRAIQREEGS (317 aa)) are ribokinase. An ATP-binding site is contributed by 194–197 (NLSE). Asp263 is an active-site residue. The interval 343–473 (FTNGCFDILH…TAIVEKIRKN (131 aa)) is cytidylyltransferase.

The protein in the N-terminal section; belongs to the carbohydrate kinase PfkB family. It in the C-terminal section; belongs to the cytidylyltransferase family. In terms of assembly, homodimer.

The catalysed reaction is D-glycero-beta-D-manno-heptose 7-phosphate + ATP = D-glycero-beta-D-manno-heptose 1,7-bisphosphate + ADP + H(+). It carries out the reaction D-glycero-beta-D-manno-heptose 1-phosphate + ATP + H(+) = ADP-D-glycero-beta-D-manno-heptose + diphosphate. It functions in the pathway nucleotide-sugar biosynthesis; ADP-L-glycero-beta-D-manno-heptose biosynthesis; ADP-L-glycero-beta-D-manno-heptose from D-glycero-beta-D-manno-heptose 7-phosphate: step 1/4. The protein operates within nucleotide-sugar biosynthesis; ADP-L-glycero-beta-D-manno-heptose biosynthesis; ADP-L-glycero-beta-D-manno-heptose from D-glycero-beta-D-manno-heptose 7-phosphate: step 3/4. Its function is as follows. Catalyzes the phosphorylation of D-glycero-D-manno-heptose 7-phosphate at the C-1 position to selectively form D-glycero-beta-D-manno-heptose-1,7-bisphosphate. Catalyzes the ADP transfer from ATP to D-glycero-beta-D-manno-heptose 1-phosphate, yielding ADP-D-glycero-beta-D-manno-heptose. The chain is Bifunctional protein HldE from Pseudomonas putida (strain W619).